We begin with the raw amino-acid sequence, 760 residues long: Complement C2 (760 aa).

A signal peptide spans 1 to 18; that stretch reads MAPLLALFYLLQLGPGLA. 3 Sushi domains span residues 20-90, 92-151, and 154-212; these read LFCN…AVCK, VRCL…VCDN, and SHCP…ICRQ. 6 disulfide bridges follow: Cys-22–Cys-62, Cys-49–Cys-89, Cys-94–Cys-136, Cys-122–Cys-149, Cys-156–Cys-197, and Cys-182–Cys-210. N-linked (GlcNAc...) asparagine glycosylation is found at Asn-27 and Asn-32. Residue Asn-117 is glycosylated (N-linked (GlcNAc...) asparagine). Positions 261 to 459 constitute a VWFA domain; the sequence is NLYLLLDASQ…KALQQIFEHM (199 aa). Residues 267 to 271 carry the MIDAS-like motif motif; sequence DASQS. Positions 269 and 271 each coordinate Mg(2+). 2 N-linked (GlcNAc...) asparagine glycosylation sites follow: Asn-297 and Asn-340. Thr-344 is a Mg(2+) binding site. Intrachain disulfides connect Cys-470-Cys-590, Cys-499-Cys-515, Cys-593-Cys-609, Cys-647-Cys-674, and Cys-685-Cys-715. The Peptidase S1 domain maps to 471 to 752; the sequence is GVGNMSANAS…LQPWLRQHLD (282 aa). N-linked (GlcNAc...) asparagine glycans are attached at residues Asn-474 and Asn-478. Residues His-514 and Asp-570 each act as charge relay system in the active site. N-linked (GlcNAc...) asparagine glycosylation occurs at Asn-663. The Charge relay system role is filled by Ser-689.

Belongs to the peptidase S1 family. Serine protease component of the C3 convertase, also named C4bC2b, composed of the serine protease complement C2b and complement C4b. Serine protease component of the C5 convertase, also named C4bC2bC3b, composed of the serine protease complement C2b, complement C3b, as well as complement C4b. Mg(2+) serves as cofactor. Mn(2+) is required as a cofactor. Post-translationally, cleaved and activated by different proteases depending on the complement pathway to generate complement C2a and serine protease complement C2b chains. Cleaved and activated by C1S following activation by the classical complement system. Cleaved and activated by MASP2 following activation by the lectin complement system. Cleaved and activated by GZMK following activation by the GZMK complement system.

It is found in the secreted. It localises to the cell surface. The catalysed reaction is Selective cleavage of Arg-|-Ser bond in complement component C3 alpha-chain to form C3a and C3b, and Arg-|-Xaa bond in complement component C5 alpha-chain to form C5a and C5b.. Precursor of the catalytic component of the C3 and C5 convertase complexes, which are part of the complement pathway, a cascade of proteins that leads to phagocytosis and breakdown of pathogens and signaling that strengthens the adaptive immune system. Component C2 is part of the classical, lectin and GZMK complement systems. Functionally, catalytic component of the complement C3 and C5 convertase complexes. Following complement activation, recruited to the surface of pathogens by complement C4b opsonin to form the C3 convertase, or C3b and C4b opsonins to form the C5 convertase. As part of the C3 convertase, cleaves and activate C3 into C3a anaphylatoxin and C3b opsonin, the next components of the complement pathways. As part of the C5 convertase, cleaves and activate C5 into C5a anaphylatoxin and C5b component of the membrane attack complex. The chain is Complement C2 from Mus musculus (Mouse).